We begin with the raw amino-acid sequence, 333 residues long: tRNA N6-adenosine threonylcarbamoyltransferase (333 aa).

Fe cation contacts are provided by His111 and His115. Residues 134 to 138, Asp167, Gly180, and Asn272 contribute to the substrate site; that span reads LVSGG. A Fe cation-binding site is contributed by Asp300.

This sequence belongs to the KAE1 / TsaD family. Fe(2+) is required as a cofactor.

It localises to the cytoplasm. The catalysed reaction is L-threonylcarbamoyladenylate + adenosine(37) in tRNA = N(6)-L-threonylcarbamoyladenosine(37) in tRNA + AMP + H(+). Required for the formation of a threonylcarbamoyl group on adenosine at position 37 (t(6)A37) in tRNAs that read codons beginning with adenine. Is involved in the transfer of the threonylcarbamoyl moiety of threonylcarbamoyl-AMP (TC-AMP) to the N6 group of A37, together with TsaE and TsaB. TsaD likely plays a direct catalytic role in this reaction. The sequence is that of tRNA N6-adenosine threonylcarbamoyltransferase from Legionella pneumophila (strain Paris).